The chain runs to 386 residues: Short-chain dehydrogenase/reductase family 42E member 1 (386 aa).

Catalysis depends on tyrosine 150, which acts as the Proton acceptor. An NAD(+)-binding site is contributed by lysine 154. The next 2 membrane-spanning stretches (helical) occupy residues 279-299 (FPLSLVYFFAFLTEWIHFFIS) and 363-383 (YLIWDIIFILLVTVVLLSWLP).

The protein belongs to the 3-beta-HSD family.

Its subcellular location is the membrane. The polypeptide is Short-chain dehydrogenase/reductase family 42E member 1 (sdr42e1) (Xenopus laevis (African clawed frog)).